The sequence spans 120 residues: Immunoglobulin kappa variable 2D-29 (120 aa).

Residues 1–20 (MRLPAQLLGLLMLWIPGSSA) form the signal peptide. Residues 21–43 (DIVMTQTPLSLSVTPGQPASISC) form a framework-1 region. Residues 21–120 (DIVMTQTPLS…YYCMQSIQLP (100 aa)) enclose the Ig-like domain. Cys-43 and Cys-113 are disulfide-bonded. The segment at 44-59 (KSSQSLLHSDGKTYLY) is complementarity-determining-1. The segment at 60-74 (WYLQKPGQPPQLLIY) is framework-2. The complementarity-determining-2 stretch occupies residues 75–81 (EVSNRFS). Residues 82-113 (GVPDRFSGSGSGTDFTLKISRVEAEDVGVYYC) are framework-3. Residues 114–120 (MQSIQLP) form a complementarity-determining-3 region.

In terms of assembly, immunoglobulins are composed of two identical heavy chains and two identical light chains; disulfide-linked.

It localises to the secreted. The protein resides in the cell membrane. Functionally, v region of the variable domain of immunoglobulin light chains that participates in the antigen recognition. Immunoglobulins, also known as antibodies, are membrane-bound or secreted glycoproteins produced by B lymphocytes. In the recognition phase of humoral immunity, the membrane-bound immunoglobulins serve as receptors which, upon binding of a specific antigen, trigger the clonal expansion and differentiation of B lymphocytes into immunoglobulins-secreting plasma cells. Secreted immunoglobulins mediate the effector phase of humoral immunity, which results in the elimination of bound antigens. The antigen binding site is formed by the variable domain of one heavy chain, together with that of its associated light chain. Thus, each immunoglobulin has two antigen binding sites with remarkable affinity for a particular antigen. The variable domains are assembled by a process called V-(D)-J rearrangement and can then be subjected to somatic hypermutations which, after exposure to antigen and selection, allow affinity maturation for a particular antigen. This Homo sapiens (Human) protein is Immunoglobulin kappa variable 2D-29.